A 306-amino-acid polypeptide reads, in one-letter code: Ribosomal protein L11 methyltransferase (306 aa).

S-adenosyl-L-methionine is bound by residues Thr154, Gly179, Asp201, and Asn242.

The protein belongs to the methyltransferase superfamily. PrmA family.

It is found in the cytoplasm. It carries out the reaction L-lysyl-[protein] + 3 S-adenosyl-L-methionine = N(6),N(6),N(6)-trimethyl-L-lysyl-[protein] + 3 S-adenosyl-L-homocysteine + 3 H(+). In terms of biological role, methylates ribosomal protein L11. The sequence is that of Ribosomal protein L11 methyltransferase from Xanthomonas euvesicatoria pv. vesicatoria (strain 85-10) (Xanthomonas campestris pv. vesicatoria).